Reading from the N-terminus, the 172-residue chain is Translocon-associated protein subunit delta (172 aa).

Residues 1–24 (MAALASLGALALLLLSGLSCCSEA) form the signal peptide. The cysteines at positions 25 and 56 are disulfide-linked. Residues 25-143 (CVEPQITPSY…SVDHRGTWNG (119 aa)) are Lumenal-facing. Residue Lys72 forms a Glycyl lysine isopeptide (Lys-Gly) (interchain with G-Cter in ubiquitin) linkage. A helical membrane pass occupies residues 144–164 (PWVSTEVLAAAIGLVIYYLAF). Residues 165–172 (SAKSHIQA) are Cytoplasmic-facing.

Belongs to the TRAP-delta family. Heterotetramer of TRAP-alpha, TRAP-beta, TRAP-delta and TRAP-gamma.

The protein resides in the endoplasmic reticulum membrane. TRAP proteins are part of a complex whose function is to bind calcium to the ER membrane and thereby regulate the retention of ER resident proteins. The sequence is that of Translocon-associated protein subunit delta (SSR4) from Bos taurus (Bovine).